The sequence spans 327 residues: Methionyl-tRNA formyltransferase (327 aa).

A (6S)-5,6,7,8-tetrahydrofolate-binding site is contributed by 121–124 (SLLP).

It belongs to the Fmt family.

The catalysed reaction is L-methionyl-tRNA(fMet) + (6R)-10-formyltetrahydrofolate = N-formyl-L-methionyl-tRNA(fMet) + (6S)-5,6,7,8-tetrahydrofolate + H(+). In terms of biological role, attaches a formyl group to the free amino group of methionyl-tRNA(fMet). The formyl group appears to play a dual role in the initiator identity of N-formylmethionyl-tRNA by promoting its recognition by IF2 and preventing the misappropriation of this tRNA by the elongation apparatus. This chain is Methionyl-tRNA formyltransferase, found in Burkholderia mallei (strain ATCC 23344).